Consider the following 229-residue polypeptide: PKHD-type hydroxylase RPD_3334 (229 aa).

In terms of domain architecture, Fe2OG dioxygenase spans 78-180; that stretch reads QIFPPLFNRY…RVASFFWLQS (103 aa). 3 residues coordinate Fe cation: histidine 98, aspartate 100, and histidine 161. 2-oxoglutarate is bound at residue arginine 171.

The cofactor is Fe(2+). Requires L-ascorbate as cofactor.

The protein is PKHD-type hydroxylase RPD_3334 of Rhodopseudomonas palustris (strain BisB5).